The following is a 496-amino-acid chain: Membrane-bound lytic murein transglycosylase F (496 aa).

The N-terminal stretch at 1-31 (MPIFSTRVLTYLRCIFRLFIGLTLLLTLVGC) is a signal peptide. Residues 32–271 (DFYTPSSQLE…KLDEKYFGHV (240 aa)) are non-LT domain. An LT domain region spans residues 273–496 (NFDFVDTRTF…AEVVKQITLR (224 aa)). E316 is an active-site residue. The disordered stretch occupies residues 464-486 (HRREELDDDDSSEPPSAERPTVI).

In the N-terminal section; belongs to the bacterial solute-binding protein 3 family. The protein in the C-terminal section; belongs to the transglycosylase Slt family.

It is found in the cell outer membrane. It catalyses the reaction Exolytic cleavage of the (1-&gt;4)-beta-glycosidic linkage between N-acetylmuramic acid (MurNAc) and N-acetylglucosamine (GlcNAc) residues in peptidoglycan, from either the reducing or the non-reducing ends of the peptidoglycan chains, with concomitant formation of a 1,6-anhydrobond in the MurNAc residue.. Its function is as follows. Murein-degrading enzyme that degrades murein glycan strands and insoluble, high-molecular weight murein sacculi, with the concomitant formation of a 1,6-anhydromuramoyl product. Lytic transglycosylases (LTs) play an integral role in the metabolism of the peptidoglycan (PG) sacculus. Their lytic action creates space within the PG sacculus to allow for its expansion as well as for the insertion of various structures such as secretion systems and flagella. This is Membrane-bound lytic murein transglycosylase F from Aeromonas hydrophila subsp. hydrophila (strain ATCC 7966 / DSM 30187 / BCRC 13018 / CCUG 14551 / JCM 1027 / KCTC 2358 / NCIMB 9240 / NCTC 8049).